A 79-amino-acid chain; its full sequence is Protein OPG081 (79 aa).

Residues 1–8 (MVDAITVL) lie on the Intravirion side of the membrane. Residues 9-29 (TAIGITVLMLLMVISGAAMIV) form a helical membrane-spanning segment. Topologically, residues 30-47 (KELNPNDIFTMQSLKFNR) are virion surface. A helical transmembrane segment spans residues 48 to 68 (AVTIFKYIGLFIYIPGTIILY). Over 69 to 79 (ATYVKSLLMKS) the chain is Intravirion.

This sequence belongs to the orthopoxvirus OPG081 family.

The protein resides in the virion membrane. In terms of biological role, envelope protein. This Vaccinia virus (strain Copenhagen) (VACV) protein is Protein OPG081 (OPG081).